The chain runs to 141 residues: HTH-type transcriptional regulator LrpA (141 aa).

The region spanning 2-63 is the HTH asnC-type domain; that stretch reads IDERDKIILE…RINPKKLGYS (62 aa). The H-T-H motif DNA-binding region spans 21-40; sequence FTEIAKKLGISETAVRKRVK.

Homooctamer; tetramer of dimers.

Its function is as follows. DNA-binding protein that negatively regulates its own transcription. Interferes with RNA polymerase (RNAP) recruitment by inhibiting the association of RNAP with the TBP-TFB promoter complex. This chain is HTH-type transcriptional regulator LrpA (lrpA), found in Pyrococcus horikoshii (strain ATCC 700860 / DSM 12428 / JCM 9974 / NBRC 100139 / OT-3).